Reading from the N-terminus, the 96-residue chain is Co-chaperonin GroES (96 aa).

The protein belongs to the GroES chaperonin family. As to quaternary structure, heptamer of 7 subunits arranged in a ring. Interacts with the chaperonin GroEL.

Its subcellular location is the cytoplasm. Functionally, together with the chaperonin GroEL, plays an essential role in assisting protein folding. The GroEL-GroES system forms a nano-cage that allows encapsulation of the non-native substrate proteins and provides a physical environment optimized to promote and accelerate protein folding. GroES binds to the apical surface of the GroEL ring, thereby capping the opening of the GroEL channel. The sequence is that of Co-chaperonin GroES from Actinobacillus pleuropneumoniae serotype 5b (strain L20).